A 65-amino-acid polypeptide reads, in one-letter code: Large ribosomal subunit protein bL35 (65 aa).

Over residues 1–16 the composition is skewed to basic residues; sequence MPKQKTHRASAKRFKR. The segment at 1-21 is disordered; the sequence is MPKQKTHRASAKRFKRTGSGG.

Belongs to the bacterial ribosomal protein bL35 family.

The protein is Large ribosomal subunit protein bL35 of Streptococcus pyogenes serotype M18 (strain MGAS8232).